The following is a 114-amino-acid chain: Large ribosomal subunit protein uL22 (114 aa).

Belongs to the universal ribosomal protein uL22 family. In terms of assembly, part of the 50S ribosomal subunit.

Functionally, this protein binds specifically to 23S rRNA; its binding is stimulated by other ribosomal proteins, e.g. L4, L17, and L20. It is important during the early stages of 50S assembly. It makes multiple contacts with different domains of the 23S rRNA in the assembled 50S subunit and ribosome. Its function is as follows. The globular domain of the protein is located near the polypeptide exit tunnel on the outside of the subunit, while an extended beta-hairpin is found that lines the wall of the exit tunnel in the center of the 70S ribosome. This Streptococcus thermophilus (strain CNRZ 1066) protein is Large ribosomal subunit protein uL22.